The chain runs to 314 residues: Glyceraldehyde-3-phosphate dehydrogenase A, chloroplastic (314 aa).

NADP(+)-binding positions include Arg-5–Ile-6, Asp-29, and Arg-74. Residues Cys-13 and Cys-283 are joined by a disulfide bond. D-glyceraldehyde 3-phosphate is bound by residues Ser-147–Thr-149, Thr-178, Arg-193, Thr-206–Gly-207, and Arg-229. Cys-148 functions as the Nucleophile in the catalytic mechanism. Asn-311 is an NADP(+) binding site.

Belongs to the glyceraldehyde-3-phosphate dehydrogenase family. Homotetramer.

The protein localises to the plastid. It localises to the chloroplast. The enzyme catalyses D-glyceraldehyde 3-phosphate + phosphate + NADP(+) = (2R)-3-phospho-glyceroyl phosphate + NADPH + H(+). It participates in carbohydrate biosynthesis; Calvin cycle. This is Glyceraldehyde-3-phosphate dehydrogenase A, chloroplastic (GapA) from Scenedesmus vacuolatus (Green alga).